The primary structure comprises 210 residues: Tissue inhibitor of metalloproteinase (210 aa).

An N-terminal signal peptide occupies residues 1–27; it reads MDLRKHLGLLTLLLVAVFAFYGRPADA. Cysteine 28 is a binding site for Zn(2+). Involved in metalloproteinase-binding regions lie at residues 28–31 and 93–94; these read CSCM and DA. Disulfide bonds link cysteine 28/cysteine 96, cysteine 30/cysteine 118, cysteine 145/cysteine 195, cysteine 150/cysteine 155, and cysteine 165/cysteine 180. An NTR domain is found at 28 to 145; sequence CSCMPSHPQT…SGGYAKATNC (118 aa).

This sequence belongs to the protease inhibitor I35 (TIMP) family. Expressed in heads of female and male adult flies. Expressed at the time of eclosion in unopened wings of adult flies. Strongly expressed at the tip of ovarian germarium region 1 where germline stem cells (GSCs) and cystoblasts reside and in region 2 of the germarium.

Its subcellular location is the secreted. Its function is as follows. Metalloproteinase inhibitor that acts on both matrix metalloproteinases Mmp1 and Mmp2 in vitro. Complexes with metalloproteinases and irreversibly inactivates them by binding to their catalytic zinc cofactor. Required for wing maturation which is the final step in morphogenesis of the adult fly. Involved in the negative regulation of developmental tissue invasion for imaginal disk eversion during metamorphosis by inhibiting Mmp-mediated basement membrane (BM) degradation. Required for oogenesis and for the long-term maintainance of germarial structure and shape in the adult ovaries. Required for maintaining composition and biophysical properties of the extracellular matrix (ECM), and for the normal organization and cyst production of the germline stem cell (GSC) niche. In Drosophila melanogaster (Fruit fly), this protein is Tissue inhibitor of metalloproteinase.